The chain runs to 188 residues: Pyridoxal 5'-phosphate synthase subunit PdxT (188 aa).

An L-glutamine-binding site is contributed by 46-48; that stretch reads GES. C78 acts as the Nucleophile in catalysis. Residues R105 and 134–135 each bind L-glutamine; that span reads IR. Active-site charge relay system residues include H170 and E172.

It belongs to the glutaminase PdxT/SNO family. In the presence of PdxS, forms a dodecamer of heterodimers. Only shows activity in the heterodimer.

It catalyses the reaction aldehydo-D-ribose 5-phosphate + D-glyceraldehyde 3-phosphate + L-glutamine = pyridoxal 5'-phosphate + L-glutamate + phosphate + 3 H2O + H(+). The enzyme catalyses L-glutamine + H2O = L-glutamate + NH4(+). The protein operates within cofactor biosynthesis; pyridoxal 5'-phosphate biosynthesis. In terms of biological role, catalyzes the hydrolysis of glutamine to glutamate and ammonia as part of the biosynthesis of pyridoxal 5'-phosphate. The resulting ammonia molecule is channeled to the active site of PdxS. The protein is Pyridoxal 5'-phosphate synthase subunit PdxT of Clostridium kluyveri (strain ATCC 8527 / DSM 555 / NBRC 12016 / NCIMB 10680 / K1).